The chain runs to 349 residues: Terpene cyclase rstn5 (349 aa).

Helical transmembrane passes span 4 to 24 (LTPL…WGVF), 81 to 101 (FMVQ…TEGA), 116 to 136 (GLFS…FWFV), 158 to 178 (VVPS…FDPF), and 181 to 201 (GLDL…CISL). N222 carries an N-linked (GlcNAc...) asparagine glycan. The next 3 membrane-spanning stretches (helical) occupy residues 228–248 (VAVG…GLTG), 271–291 (LVLL…LLLA), and 309–329 (TLAV…AWAL).

The protein belongs to the membrane-bound ascI terpene cyclase family.

It localises to the membrane. The protein operates within antifungal biosynthesis. Cyclase; part of the gene cluster that mediates the biosynthesis of the tetrahydropyranyl antifungal agent restricticin that acts as an inhibitor of CYP51 and blocks the ergosterol biosynthesis. The highly reducing polyketide synthase rstn3, the short chain dehydrogenase rstn4, the cyclase rstn5, the FAD-dependent monooxygenase rstn6 and the enoylreductase rstn7 are required to generate the first stable intermediate desmethylrestrictinol. Rstn3 with rstn7 biosynthesize the first polyketide chain intermediate that is reduced by rstn4, followed by epoxidation by rstn6 before 6-endo cyclization via epoxide opening by rstn5 leads to desmethylrestrictinol. The methyltransferase rstn1 then catalyzes the C4 O-methylation of desmethylrestrictinol to produce restrictinol, and the nonribosomal peptide synthetase rstn8 catalyzes the C3 esterification of restrictinol with glycine that leads to restricticin. The protein is Terpene cyclase rstn5 of Aspergillus nomiae NRRL (strain ATCC 15546 / NRRL 13137 / CBS 260.88 / M93).